A 72-amino-acid polypeptide reads, in one-letter code: Sec-independent protein translocase protein TatA (72 aa).

A helical transmembrane segment spans residues 1-21 (MPFGLGLPEILVIGVIALLIF). Residues 41-72 (KSGVSDEPAPQQSASKETAPNPPQSLPSGKDS) are disordered.

Belongs to the TatA/E family. Forms a complex with TatC.

The protein resides in the cell inner membrane. Its function is as follows. Part of the twin-arginine translocation (Tat) system that transports large folded proteins containing a characteristic twin-arginine motif in their signal peptide across membranes. TatA could form the protein-conducting channel of the Tat system. This chain is Sec-independent protein translocase protein TatA, found in Gloeobacter violaceus (strain ATCC 29082 / PCC 7421).